The primary structure comprises 695 residues: Pre-mRNA-splicing factor CLF1 (695 aa).

HAT repeat units follow at residues 41-73 (DVQR…FEIE), 75-107 (HDMR…SELK), 109-141 (GYIN…VEES), 143-174 (AHFD…FEVR), 176-207 (ERYE…FEVR), 296-328 (TIIL…LLEN), 333-365 (LVME…IWIK), 375-412 (NDIP…FEIR), 414-445 (DNLE…LETK), 447-479 (REFD…FEDS), 521-553 (QNFD…KKLT), and 591-629 (NNKD…FEGQ).

It belongs to the crooked-neck family. In terms of assembly, associated with the spliceosome.

It is found in the nucleus. Involved in pre-mRNA splicing and cell cycle progression. Required for the spliceosome assembly and initiation of the DNA replication. This chain is Pre-mRNA-splicing factor CLF1 (CLF1), found in Candida glabrata (strain ATCC 2001 / BCRC 20586 / JCM 3761 / NBRC 0622 / NRRL Y-65 / CBS 138) (Yeast).